A 607-amino-acid polypeptide reads, in one-letter code: ATP-dependent DNA helicase II subunit 1 (607 aa).

The 212-residue stretch at 241-452 (MDLGNDVRIG…IETMQRILRG (212 aa)) folds into the Ku domain. Positions 570–604 (IKALKVSQLKDILRDRGLRVSGKKADLLDNLTNYV) constitute an SAP domain.

The protein belongs to the ku70 family. Heterodimer of pku70 and pku80.

Its subcellular location is the nucleus. It localises to the chromosome. The protein resides in the telomere. It catalyses the reaction ATP + H2O = ADP + phosphate + H(+). Its function is as follows. Single-stranded DNA-dependent ATP-dependent helicase. Involved in non-homologous end joining (NHEJ) DNA double strand break repair. DNA-binding is sequence-independent but has a high affinity to nicks in double-stranded DNA and to the ends of duplex DNA. Binds to naturally occurring chromosomal ends, and therefore provides chromosomal end protection. Required also for telomere recombination to repair telomeric ends in the absence of telomerase. ku70, of the ku70/ku80 heterodimer, binds to the stem loop of tlc1, the RNA component of telomerase. Required for mating-type switching. Involved in telomere maintenance. Interacts with telomeric repeats and subtelomeric sequences thereby controlling telomere length and protecting against subtelomeric rearrangement. Maintains telomeric chromatin, which is involved in silencing the expression of genes located at the telomere. In Schizosaccharomyces pombe (strain 972 / ATCC 24843) (Fission yeast), this protein is ATP-dependent DNA helicase II subunit 1 (pku70).